Here is a 1399-residue protein sequence, read N- to C-terminus: Dicer-like protein 2 (1399 aa).

The Helicase ATP-binding domain maps to 18–194; sequence MVEESMQSNI…EDLQQIERNL (177 aa). 31-38 lines the ATP pocket; the sequence is MDTGSGKT. The DEAH box motif lies at 139 to 142; the sequence is DEAH. A Helicase C-terminal domain is found at 364–549; sequence KLQLLIKFLV…QSETGHRNFE (186 aa). Residues 562–656 enclose the Dicer dsRNA-binding fold domain; it reads ASQHLHHFCS…LPARQEADDE (95 aa). 2 consecutive RNase III domains span residues 897 to 1054 and 1094 to 1270; these read LPSI…TVGG and LDVL…IDSL. Mg(2+) contacts are provided by Glu-1133, Asp-1256, and Glu-1259. The 70-residue stretch at 1301–1370 folds into the DRBM domain; sequence HPKERLGHLA…AWKAVGVLES (70 aa).

It belongs to the helicase family. Dicer subfamily. Requires Mg(2+) as cofactor. Mn(2+) serves as cofactor.

Functionally, dicer-like endonuclease involved in cleaving double-stranded RNA in the RNA interference (RNAi) pathway. Produces 21 to 25 bp dsRNAs (siRNAs) which target the selective destruction of homologous RNAs leading to sequence-specific suppression of gene expression, called post-transcriptional gene silencing (PTGS). Part of a broad host defense response against viral infection and transposons. This chain is Dicer-like protein 2 (DCL2), found in Phaeosphaeria nodorum (strain SN15 / ATCC MYA-4574 / FGSC 10173) (Glume blotch fungus).